The primary structure comprises 128 residues: Sulfurtransferase TusD (128 aa).

Cys-78 functions as the Cysteine persulfide intermediate in the catalytic mechanism.

This sequence belongs to the DsrE/TusD family. Heterohexamer, formed by a dimer of trimers. The hexameric TusBCD complex contains 2 copies each of TusB, TusC and TusD. The TusBCD complex interacts with TusE.

It localises to the cytoplasm. Its function is as follows. Part of a sulfur-relay system required for 2-thiolation of 5-methylaminomethyl-2-thiouridine (mnm(5)s(2)U) at tRNA wobble positions. Accepts sulfur from TusA and transfers it in turn to TusE. This Klebsiella pneumoniae (strain 342) protein is Sulfurtransferase TusD.